The following is a 271-amino-acid chain: GATA transcription factor 19 (271 aa).

The tract at residues 1–23 (MAAEPPADGRDPPADDGAAGDGA) is disordered. In terms of domain architecture, Tify spans 33-68 (LSAASEQLTLVYQGEVYVFDPVPPQKVQAVLLVLGG). The CCT domain maps to 95–137 (RIASLMRFREKRKERCFDKKIRYSVRKEVAQKMKRRKGQFAGR). A GATA-type zinc finger spans residues 166–193 (CQNCGISSRLTPAMRRGPAGPRSLCNAC). A disordered region spans residues 238 to 271 (NQTTMKTDTEMVPEQEQKADVLPPTKEEDSMATS). A compositionally biased stretch (basic and acidic residues) spans 252-271 (QEQKADVLPPTKEEDSMATS).

It belongs to the type IV zinc-finger family. Class C subfamily.

It is found in the nucleus. In terms of biological role, transcriptional activator that specifically binds 5'-GATA-3' or 5'-GAT-3' motifs within gene promoters. The chain is GATA transcription factor 19 from Oryza sativa subsp. indica (Rice).